A 144-amino-acid polypeptide reads, in one-letter code: MESTLGSDLARLVRVWRALIDHRLKPLALTQTHWVTLHSINRLPPEQSQIQLAKAIGIEQPSLVRTLDQLEEKGLITRHTCANDRRAKRIKLTEAADPIIREVDSVISSTRGEILSGITTDEVQLLVGLIGKLEQNITELQNKQ.

The region spanning 2–135 is the HTH marR-type domain; sequence ESTLGSDLAR…LVGLIGKLEQ (134 aa). Residues 49-72 constitute a DNA-binding region (H-T-H motif); that stretch reads QIQLAKAIGIEQPSLVRTLDQLEE.

The protein belongs to the SlyA family. In terms of assembly, homodimer.

Transcription regulator that can specifically activate or repress expression of target genes. This is Transcriptional regulator SlyA from Serratia proteamaculans (strain 568).